A 423-amino-acid chain; its full sequence is Steroid hormone receptor ERR1 (423 aa).

The disordered stretch occupies residues methionine 1 to glycine 67. Positions methionine 1–lysine 76 are repressor domain. Residue lysine 14 forms a Glycyl lysine isopeptide (Lys-Gly) (interchain with G-Cter in SUMO) linkage. Serine 19 and serine 22 each carry phosphoserine. The span at glycine 58–glycine 67 shows a compositional bias: gly residues. The segment at residues lysine 76–leucine 151 is a DNA-binding region (nuclear receptor). 2 consecutive NR C4-type zinc fingers follow at residues cysteine 79–cysteine 99 and cysteine 115–cysteine 134. N6-acetyllysine; by PCAF/KAT2B occurs at positions 129, 138, 160, and 162. A Glycyl lysine isopeptide (Lys-Gly) (interchain with G-Cter in SUMO2) cross-link involves residue lysine 189. The NR LBD domain occupies proline 193–methionine 421. Lysine 403 participates in a covalent cross-link: Glycyl lysine isopeptide (Lys-Gly) (interchain with G-Cter in SUMO); alternate. Lysine 403 is covalently cross-linked (Glycyl lysine isopeptide (Lys-Gly) (interchain with G-Cter in SUMO2); alternate). Residues lysine 403–aspartate 423 form an AF-2 domain region.

The protein belongs to the nuclear hormone receptor family. NR3 subfamily. In terms of assembly, binds DNA as a monomer or a homodimer. Interacts (via the AF2 domain) with coactivator PPARGC1A (via the L3 motif); the interaction greatly enhances transcriptional activity of genes involved in energy metabolism. Interacts with PIAS4; the interaction enhances sumoylation. Interacts with MAPK15; promotes re-localization of ESRRA to the cytoplasm through a XPO1-dependent mechanism then inhibits ESRRA transcriptional activity. In terms of processing, phosphorylation on Ser-19 enhances sumoylation on Lys-14 increasing repression of transcriptional activity. Sumoylated with SUMO2. Main site is Lys-14 which is enhanced by phosphorylation on Ser-19, cofactor activation, and by interaction with PIAS4. Sumoylation enhances repression of transcriptional activity, but has no effect on subcellular location nor on DNA binding. Post-translationally, reversibly acetylated. Acetylation by PCAF/KAT2 at Lys-129, Lys-138, Lys-160 and Lys-162 and PCAF/KAT2 decreases transcriptional activity probably by inhibiting DNA-binding activity; deacetylation involves SIRT1 and HDAC8 and increases DNA-binding.

It is found in the nucleus. Its subcellular location is the cytoplasm. Its function is as follows. Binds to an ERR-alpha response element (ERRE) containing a single consensus half-site, 5'-TNAAGGTCA-3'. Can bind to the medium-chain acyl coenzyme A dehydrogenase (MCAD) response element NRRE-1 and may act as an important regulator of MCAD promoter. Binds to the C1 region of the lactoferrin gene promoter. Requires dimerization and the coactivator, PGC-1A, for full activity. The ERRalpha/PGC1alpha complex is a regulator of energy metabolism. Induces the expression of PERM1 in the skeletal muscle. The chain is Steroid hormone receptor ERR1 (ESRRA) from Homo sapiens (Human).